A 188-amino-acid polypeptide reads, in one-letter code: dCTP deaminase (188 aa).

Residues 111–116, 135–137, Q156, Y170, and Q180 contribute to the dCTP site; these read KSTYAR and TLE. E137 functions as the Proton donor/acceptor in the catalytic mechanism.

It belongs to the dCTP deaminase family. Homotrimer.

The enzyme catalyses dCTP + H2O + H(+) = dUTP + NH4(+). Its pathway is pyrimidine metabolism; dUMP biosynthesis; dUMP from dCTP (dUTP route): step 1/2. Functionally, catalyzes the deamination of dCTP to dUTP. The protein is dCTP deaminase of Dichelobacter nodosus (strain VCS1703A).